The following is a 312-amino-acid chain: Taste receptor type 2 member 103 (312 aa).

Topologically, residues 1 to 6 (MVLTIR) are extracellular. The chain crosses the membrane as a helical span at residues 7 to 27 (AILWVTLITIISLEFIIGILG). Topologically, residues 28–61 (NVFIALVNIIDWVKRGKISAVDKTYMALAISRTA) are cytoplasmic. Residues 62–82 (FLLSLITGFLVSLLDPALLGM) traverse the membrane as a helical segment. Residues 83-92 (RTMVRLLTIS) are Extracellular-facing. Residues 93 to 113 (WMVTNHFSVWFATCLSIFYFL) traverse the membrane as a helical segment. Over 114 to 132 (KIANFSNSIFLVLKWEAKK) the chain is Cytoplasmic. The helical transmembrane segment at 133–153 (VVSVTLVVSVIILIMNIIVIN) threads the bilayer. Residues 154-185 (KFTDRLQVNTLQNCSTSNTLKDYGLFLFISTG) lie on the Extracellular side of the membrane. Asn166 carries an N-linked (GlcNAc...) asparagine glycan. The chain crosses the membrane as a helical span at residues 186–206 (FTLTPFAVSLTMFLLLIFSLW). Residues 207–229 (RHLKNMCHSATGSRDVSTVAHIK) are Cytoplasmic-facing. A helical transmembrane segment spans residues 230-250 (GLQTVVTFLLLYTAFVMSLLS). Residues 251–264 (ESLNINIQHTNLLS) lie on the Extracellular side of the membrane. A helical transmembrane segment spans residues 265–285 (HFLRSIGVAFPTGHSCVLILG). Topologically, residues 286–312 (NSKLRQASLSVILWLRYKYKHIENWGP) are cytoplasmic.

It belongs to the G-protein coupled receptor T2R family. In terms of tissue distribution, expressed in subsets of taste receptor cells of the tongue and palate epithelium and exclusively in gustducin-positive cells. Expressed in 15% taste bud cells in circumvallate and foliate papillae but only in 2% in fungiform papillae.

The protein resides in the membrane. In terms of biological role, gustducin-coupled receptor implicated in the perception of bitter compounds in the oral cavity and the gastrointestinal tract. Signals through PLCB2 and the calcium-regulated cation channel TRPM5. The sequence is that of Taste receptor type 2 member 103 (Tas2r103) from Mus musculus (Mouse).